Consider the following 486-residue polypeptide: Ribulose bisphosphate carboxylase large chain 1 (486 aa).

Residues Asn-125 and Thr-175 each contribute to the substrate site. The Proton acceptor role is filled by Lys-177. Position 179 (Lys-179) interacts with substrate. The Mg(2+) site is built by Lys-203, Asp-205, and Glu-206. Lys-203 is subject to N6-carboxylysine. Catalysis depends on His-295, which acts as the Proton acceptor. Residues Arg-296, His-328, and Ser-380 each contribute to the substrate site.

This sequence belongs to the RuBisCO large chain family. Type I subfamily. In terms of assembly, heterohexadecamer of 8 large chains and 8 small chains. It depends on Mg(2+) as a cofactor.

The enzyme catalyses 2 (2R)-3-phosphoglycerate + 2 H(+) = D-ribulose 1,5-bisphosphate + CO2 + H2O. The catalysed reaction is D-ribulose 1,5-bisphosphate + O2 = 2-phosphoglycolate + (2R)-3-phosphoglycerate + 2 H(+). Its function is as follows. RuBisCO catalyzes two reactions: the carboxylation of D-ribulose 1,5-bisphosphate, the primary event in carbon dioxide fixation, as well as the oxidative fragmentation of the pentose substrate. Both reactions occur simultaneously and in competition at the same active site. The chain is Ribulose bisphosphate carboxylase large chain 1 from Cereibacter sphaeroides (strain ATCC 17025 / ATH 2.4.3) (Rhodobacter sphaeroides).